The sequence spans 270 residues: Interleukin-33 (270 aa).

The interval 1–65 (MKPKMKYSTN…EACYFRRETT (65 aa)) is homeodomain-like HTH domain. A propeptide spanning residues 1-94 (MKPKMKYSTN…CQQQSTVESF (94 aa)) is cleaved from the precursor. Positions 64 to 111 (TTKRPSLKTDRKHKRHLVLAACQQQSTVESFAFGISGVQKYTRALHDS) are interaction with RELA.

This sequence belongs to the IL-1 family. Highly divergent. Forms a 1:1:1 heterotrimeric complex with its primary high-affinity receptor IL1RL1 and the coreceptor IL1RAP. Interacts with cargo receptor TMED10; the interaction mediates the translocation from the cytoplasm into the ERGIC (endoplasmic reticulum-Golgi intermediate compartment) and thereby secretion. In terms of processing, the full-length protein can be released from cells and is able to signal via the IL1RL1/ST2 receptor. However, proteolytic processing by CELA1, CSTG/cathepsin G and ELANE/neutrophil elastase produces C-terminal peptides that are more active than the unprocessed full-length protein. May also be proteolytically processed by calpains. Proteolytic cleavage mediated by apoptotic caspases including CASP3 and CASP7 results in IL33 inactivation. In vitro proteolytic cleavage by CASP1 was reported but could not be confirmed in vivo suggesting that IL33 is probably not a direct substrate for that caspase.

It localises to the nucleus. It is found in the chromosome. The protein localises to the cytoplasm. Its subcellular location is the cytoplasmic vesicle. The protein resides in the secretory vesicle. It localises to the secreted. In terms of biological role, cytokine that binds to and signals through the IL1RL1/ST2 receptor which in turn activates NF-kappa-B and MAPK signaling pathways in target cells. Involved in the maturation of Th2 cells inducing the secretion of T-helper type 2-associated cytokines. Also involved in activation of mast cells, basophils, eosinophils and natural killer cells. Acts as a chemoattractant for Th2 cells, and may function as an 'alarmin', that amplifies immune responses during tissue injury. Induces rapid UCP2-dependent mitochondrial rewiring that attenuates the generation of reactive oxygen species and preserves the integrity of Krebs cycle required for persistent production of itaconate and subsequent GATA3-dependent differentiation of inflammation-resolving alternatively activated macrophages. Its function is as follows. In quiescent endothelia the uncleaved form is constitutively and abundantly expressed, and acts as a chromatin-associated nuclear factor with transcriptional repressor properties, it may sequester nuclear NF-kappaB/RELA, lowering expression of its targets. This form is rapidely lost upon angiogenic or pro-inflammatory activation. The chain is Interleukin-33 (IL33) from Pongo abelii (Sumatran orangutan).